Here is a 561-residue protein sequence, read N- to C-terminus: 3beta-hydroxysteroid-dehydrogenase/decarboxylase isoform 3 (561 aa).

Residue Lys-166 coordinates NAD(+). Residues 379-561 (VADILLWRNE…SDASSKPMFM (183 aa)) enclose the Reticulon domain. 3 consecutive transmembrane segments (helical) span residues 392–412 (FVSF…GNTF), 420–440 (LFIF…IFGF), and 504–524 (SLAA…FIYE).

Belongs to the 3-beta-HSD family.

The protein localises to the endoplasmic reticulum membrane. The enzyme catalyses a 3beta-hydroxysteroid-4alpha-carboxylate + NADP(+) = a 3-oxosteroid + CO2 + NADPH. The catalysed reaction is a 3beta-hydroxysteroid-4alpha-carboxylate + NAD(+) = a 3-oxosteroid + CO2 + NADH. Its pathway is steroid biosynthesis; zymosterol biosynthesis; zymosterol from lanosterol: step 4/6. The sequence is that of 3beta-hydroxysteroid-dehydrogenase/decarboxylase isoform 3 (3BETAHSD/D3) from Arabidopsis thaliana (Mouse-ear cress).